A 364-amino-acid polypeptide reads, in one-letter code: Uroporphyrinogen decarboxylase (364 aa).

Residues R28 to R32, D78, Y160, T215, and H333 contribute to the substrate site.

This sequence belongs to the uroporphyrinogen decarboxylase family. Homodimer.

The protein localises to the cytoplasm. The enzyme catalyses uroporphyrinogen III + 4 H(+) = coproporphyrinogen III + 4 CO2. The protein operates within porphyrin-containing compound metabolism; protoporphyrin-IX biosynthesis; coproporphyrinogen-III from 5-aminolevulinate: step 4/4. Its function is as follows. Catalyzes the decarboxylation of four acetate groups of uroporphyrinogen-III to yield coproporphyrinogen-III. The protein is Uroporphyrinogen decarboxylase of Burkholderia pseudomallei (strain 1106a).